Reading from the N-terminus, the 206-residue chain is Ribonuclease HII (206 aa).

Residues 22-206 form the RNase H type-2 domain; sequence RFICGVDEAG…ISFLKNILSL (185 aa). Positions 28, 29, and 120 each coordinate a divalent metal cation.

It belongs to the RNase HII family. The cofactor is Mn(2+). Mg(2+) is required as a cofactor.

Its subcellular location is the cytoplasm. The catalysed reaction is Endonucleolytic cleavage to 5'-phosphomonoester.. In terms of biological role, endonuclease that specifically degrades the RNA of RNA-DNA hybrids. The sequence is that of Ribonuclease HII from Caldicellulosiruptor bescii (strain ATCC BAA-1888 / DSM 6725 / KCTC 15123 / Z-1320) (Anaerocellum thermophilum).